The primary structure comprises 389 residues: Carbamoyl phosphate synthase small chain (389 aa).

The tract at residues Met-1–Thr-199 is CPSase. L-glutamine is bound by residues Ser-50, Gly-251, and Gly-253. The region spanning His-203–Ala-389 is the Glutamine amidotransferase type-1 domain. Cys-279 acts as the Nucleophile in catalysis. 5 residues coordinate L-glutamine: Leu-280, Gln-283, Asn-321, Gly-323, and Phe-324. Active-site residues include His-363 and Glu-365.

This sequence belongs to the CarA family. In terms of assembly, composed of two chains; the small (or glutamine) chain promotes the hydrolysis of glutamine to ammonia, which is used by the large (or ammonia) chain to synthesize carbamoyl phosphate. Tetramer of heterodimers (alpha,beta)4.

The enzyme catalyses hydrogencarbonate + L-glutamine + 2 ATP + H2O = carbamoyl phosphate + L-glutamate + 2 ADP + phosphate + 2 H(+). It catalyses the reaction L-glutamine + H2O = L-glutamate + NH4(+). It functions in the pathway amino-acid biosynthesis; L-arginine biosynthesis; carbamoyl phosphate from bicarbonate: step 1/1. Its pathway is pyrimidine metabolism; UMP biosynthesis via de novo pathway; (S)-dihydroorotate from bicarbonate: step 1/3. Its function is as follows. Small subunit of the glutamine-dependent carbamoyl phosphate synthetase (CPSase). CPSase catalyzes the formation of carbamoyl phosphate from the ammonia moiety of glutamine, carbonate, and phosphate donated by ATP, constituting the first step of 2 biosynthetic pathways, one leading to arginine and/or urea and the other to pyrimidine nucleotides. The small subunit (glutamine amidotransferase) binds and cleaves glutamine to supply the large subunit with the substrate ammonia. The sequence is that of Carbamoyl phosphate synthase small chain from Haemophilus ducreyi (strain 35000HP / ATCC 700724).